A 114-amino-acid polypeptide reads, in one-letter code: Nascent polypeptide-associated complex protein (114 aa).

An NAC-A/B domain is found at Pro5–Lys69.

This sequence belongs to the NAC-alpha family. In terms of assembly, homodimer. Interacts with the ribosome. Binds ribosomal RNA.

Functionally, contacts the emerging nascent chain on the ribosome. In Sulfurisphaera tokodaii (strain DSM 16993 / JCM 10545 / NBRC 100140 / 7) (Sulfolobus tokodaii), this protein is Nascent polypeptide-associated complex protein.